The primary structure comprises 1010 residues: Signal peptide, CUB and EGF-like domain-containing protein 2 (1010 aa).

Residues Met1–Ala24 form the signal peptide. The EGF-like 1; calcium-binding domain occupies Asn28–Glu68. 8 disulfide bridges follow: Cys32–Cys45, Cys39–Cys54, Cys56–Cys67, Cys73–Cys85, Cys81–Cys94, Cys96–Cys109, Cys115–Cys126, and Cys122–Cys135. The region spanning Asp69–Leu110 is the EGF-like 2; calcium-binding domain. The 37-residue stretch at Asp111–Gln147 folds into the EGF-like 3; calcium-binding domain. EGF-like domains follow at residues Cys160–Cys196 and Cys200–Cys235. Asn249 is a glycosylation site (N-linked (GlcNAc...) asparagine). Positions Cys269 to Cys304 constitute an EGF-like 6 domain. The EGF-like 7; calcium-binding domain maps to Asp306–Gln346. Cystine bridges form between Cys310/Cys321, Cys317/Cys330, Cys332/Cys345, Cys351/Cys361, Cys357/Cys370, Cys372/Cys384, Cys390/Cys401, Cys397/Cys410, and Cys412/Cys425. The 39-residue stretch at Asp347–Gly385 folds into the EGF-like 8; calcium-binding domain. The EGF-like 9; calcium-binding domain occupies Asp386–Ile426. N-linked (GlcNAc...) asparagine glycans are attached at residues Asn488, Asn703, Asn774, and Asn803. The cysteines at positions 822 and 848 are disulfide-linked. Residues Cys822–Tyr934 enclose the CUB domain. Residues Ile860–Leu869 are interaction with the cholesterol-anchor of SHH. Cys875 and Cys896 are disulfide-bonded. N-linked (GlcNAc...) asparagine glycosylation occurs at Asn982.

Interacts with SHH via the cholesterol anchor of the dually lipid-modified SHH (ShhNp). Interacts with PTCH1. Forms homooligomers and heterooligomers with SCUBE1 and SCUBE3. Interacts with VEGFR2. N-glycosylated.

The protein resides in the secreted. Its subcellular location is the cell surface. In terms of biological role, lipid-binding protein required for SHH long-range signaling by binding to the dually lipid-modified SHH (ShhNp) and by promoting ShhNp mobilization, solubilization and release from the cell membrane. Acts by enhancing the proteolytic processing (shedding) of the lipid-modified N- and C- terminal of ShhNp at the cell surface. Synergizes with DISP1 to cause an increase in SHH secretion. Probable cell surface coreceptor for VEGFR2 involved in VEGFR2-mediated angiogenesis. The polypeptide is Signal peptide, CUB and EGF-like domain-containing protein 2 (scube2) (Danio rerio (Zebrafish)).